Reading from the N-terminus, the 105-residue chain is Small ribosomal subunit protein uS10 (105 aa).

This sequence belongs to the universal ribosomal protein uS10 family. In terms of assembly, part of the 30S ribosomal subunit.

Its function is as follows. Involved in the binding of tRNA to the ribosomes. This is Small ribosomal subunit protein uS10 from Synechocystis sp. (strain ATCC 27184 / PCC 6803 / Kazusa).